The following is a 149-amino-acid chain: Large ribosomal subunit protein uL13 (149 aa).

Belongs to the universal ribosomal protein uL13 family. In terms of assembly, part of the 50S ribosomal subunit.

This protein is one of the early assembly proteins of the 50S ribosomal subunit, although it is not seen to bind rRNA by itself. It is important during the early stages of 50S assembly. The sequence is that of Large ribosomal subunit protein uL13 from Chlorobium luteolum (strain DSM 273 / BCRC 81028 / 2530) (Pelodictyon luteolum).